The sequence spans 846 residues: MAEITVGQLAQQTNKEVDALLKQLKSFGIEKSSEKDTLTPTEMKTLLEKINSAKNTATRKKVTSVKLDGKHKINVSVKRKRRVAKKVEQQESTTLEQPQELETMVQEVSQQVDIVKEQDNIEQIVENKEAVKVQEQRQAEIAKPVIKDSGFKITAMPEIKIEEIVAEDDEGLAASDKQAKKKAAKKVFSEAVNTNTKYKREEEEKKSKAKKAGGKGFKKANPRQLSQLAGDLESFDEFGAKKGKLKAPKVKKQEFTKPVENTVRTVEIHEGITVSELAQKMAVKGAEIVKVLFNMGVMATINQSLDQDTAILIVEEMGHKYTLHNENALEEAVTIVDRSSYKKISRAPVVTIMGHVDHGKTSLLDYIRQTRVVAGEAGGITQHIGAYSVKTDKGSITFLDTPGHEAFTSMRARGAKSTDIVILVVAADDGVMPQTEEAIQHAKAARVPIVVAVNKIDKPEADPDKVISELAQRNVIPESWGGDVMFVNVSAKTGEGVADLLEAVLLQSEVLELEAFAEGLAEGVVIESRLEKGRGPVATVLVQNGNLKQGDNILCGTEYGRVRAMHNDLGKKIKAAGPATPVEILGLSGMPAAGDEMVVIENEKKAKELAAQRSQKQKEAKIAQEQSLKLSNMFNNMGKEGEQQVLKIILKGDVQGSVEAIRESLLKLSTDEVKVDIIASGIGAITSSDVTLAVASTAVVIGFNVRADSAAKKLAETDGVEFRYYNIIYDLIDDVKKAMSGLLSPEMKEQIIGIAEVREVYRSSKFGSIAGCMVIEGVVKRTNPIRVLRNNVVIYEGTLESLKRFKDDASEVKKGLECGIGVKNYNDVREGDQIEVFEVIEVAKEL.

The segment at 198-219 is disordered; that stretch reads YKREEEEKKSKAKKAGGKGFKK. The span at 207–219 shows a compositional bias: basic residues; sequence SKAKKAGGKGFKK. In terms of domain architecture, tr-type G spans 345–512; the sequence is SRAPVVTIMG…AVLLQSEVLE (168 aa). The tract at residues 354 to 361 is G1; sequence GHVDHGKT. Residue 354–361 coordinates GTP; that stretch reads GHVDHGKT. The tract at residues 379 to 383 is G2; sequence GITQH. The segment at 400–403 is G3; sequence DTPG. Residues 400 to 404 and 454 to 457 each bind GTP; these read DTPGH and NKID. Residues 454–457 form a G4 region; that stretch reads NKID. Residues 490-492 are G5; the sequence is SAK.

Belongs to the TRAFAC class translation factor GTPase superfamily. Classic translation factor GTPase family. IF-2 subfamily.

The protein resides in the cytoplasm. In terms of biological role, one of the essential components for the initiation of protein synthesis. Protects formylmethionyl-tRNA from spontaneous hydrolysis and promotes its binding to the 30S ribosomal subunits. Also involved in the hydrolysis of GTP during the formation of the 70S ribosomal complex. In Francisella tularensis subsp. tularensis (strain SCHU S4 / Schu 4), this protein is Translation initiation factor IF-2.